We begin with the raw amino-acid sequence, 702 residues long: Methionine--tRNA ligase (702 aa).

The 'HIGH' region motif lies at 14 to 24; the sequence is PYANGPVHLGH. Zn(2+)-binding residues include cysteine 146, cysteine 149, cysteine 159, and cysteine 162. Positions 344–348 match the 'KMSKS' region motif; that stretch reads KFSKS. ATP is bound at residue lysine 347. The tRNA-binding domain occupies 601–702; the sequence is EFLKVDLRVA…GKEINGKKIQ (102 aa).

The protein belongs to the class-I aminoacyl-tRNA synthetase family. MetG type 1 subfamily. As to quaternary structure, homodimer. Requires Zn(2+) as cofactor.

The protein resides in the cytoplasm. The catalysed reaction is tRNA(Met) + L-methionine + ATP = L-methionyl-tRNA(Met) + AMP + diphosphate. Functionally, is required not only for elongation of protein synthesis but also for the initiation of all mRNA translation through initiator tRNA(fMet) aminoacylation. In Chlorobium phaeobacteroides (strain DSM 266 / SMG 266 / 2430), this protein is Methionine--tRNA ligase.